The primary structure comprises 118 residues: Large ribosomal subunit protein bL20 (118 aa).

The protein belongs to the bacterial ribosomal protein bL20 family.

Functionally, binds directly to 23S ribosomal RNA and is necessary for the in vitro assembly process of the 50S ribosomal subunit. It is not involved in the protein synthesizing functions of that subunit. This chain is Large ribosomal subunit protein bL20, found in Desulforamulus reducens (strain ATCC BAA-1160 / DSM 100696 / MI-1) (Desulfotomaculum reducens).